A 506-amino-acid polypeptide reads, in one-letter code: UBX domain-containing protein 4 (506 aa).

Residues 1 to 199 (MLWFQGAIPA…PAEDLTVRVE (199 aa)) form an interaction with UBQLN1 region. Residues 1-411 (MLWFQGAIPA…VPSSSGDIWT (411 aa)) are Cytoplasmic-facing. 2 stretches are compositionally biased toward polar residues: residues 114–136 (SLKG…TPSA) and 177–189 (SLSQ…SNQR). A disordered region spans residues 114 to 193 (SLKGETSVTN…GCSNQRPAED (80 aa)). In terms of domain architecture, UBX spans 313-391 (DRSTIARIQF…ELAPSASVVL (79 aa)). An intramembrane segment occupies 412-432 (LLGTVLYPFLAIWRLISNFLF). Topologically, residues 433-506 (SNPPPAQTSA…TWNGNSTQQM (74 aa)) are cytoplasmic. The segment at 437–506 (PAQTSARATS…TWNGNSTQQM (70 aa)) is disordered. Low complexity predominate over residues 444-456 (ATSTEPSNSASSS). Basic and acidic residues predominate over residues 457–489 (KSEKREPVRKRVLEKRGEDFKKEGKIYRLRTQD). A Phosphothreonine modification is found at Thr487. Over residues 496–506 (NTWNGNSTQQM) the composition is skewed to polar residues.

Directly interacts with VCP. Interacts with UBQLN1. Forms a complex with VCP and UBQLN1.

The protein localises to the endoplasmic reticulum membrane. It localises to the nucleus envelope. Involved in endoplasmic reticulum-associated protein degradation (ERAD). Acts as a platform to recruit both UBQLN1 and VCP to the ER during ERAD. The polypeptide is UBX domain-containing protein 4 (Ubxn4) (Rattus norvegicus (Rat)).